Consider the following 295-residue polypeptide: Probable alpha-L-glutamate ligase 1 (295 aa).

An ATP-grasp domain is found at 104–287 (MQLLSRKGIG…VANAIIEFIE (184 aa)). ATP contacts are provided by residues Lys-141, 178–179 (EY), Asp-187, and 211–213 (RSN). Asp-248, Glu-260, and Asn-262 together coordinate Mg(2+). Positions 248, 260, and 262 each coordinate Mn(2+).

Belongs to the RimK family. Requires Mg(2+) as cofactor. Mn(2+) serves as cofactor.

This Shewanella denitrificans (strain OS217 / ATCC BAA-1090 / DSM 15013) protein is Probable alpha-L-glutamate ligase 1.